A 306-amino-acid polypeptide reads, in one-letter code: Methionyl-tRNA formyltransferase (306 aa).

Residue Ser-110–Pro-113 coordinates (6S)-5,6,7,8-tetrahydrofolate.

Belongs to the Fmt family.

The enzyme catalyses L-methionyl-tRNA(fMet) + (6R)-10-formyltetrahydrofolate = N-formyl-L-methionyl-tRNA(fMet) + (6S)-5,6,7,8-tetrahydrofolate + H(+). Its function is as follows. Attaches a formyl group to the free amino group of methionyl-tRNA(fMet). The formyl group appears to play a dual role in the initiator identity of N-formylmethionyl-tRNA by promoting its recognition by IF2 and preventing the misappropriation of this tRNA by the elongation apparatus. The sequence is that of Methionyl-tRNA formyltransferase from Brucella suis biovar 1 (strain 1330).